A 244-amino-acid chain; its full sequence is Protein HRI1 (244 aa).

Residue Ser-143 is modified to Phosphoserine.

The protein belongs to the HRI1 family. Interacts with HRR25. May interact with SEC72.

The protein resides in the cytoplasm. Its subcellular location is the nucleus. Functionally, unknown. Non essential. This Saccharomyces cerevisiae (strain ATCC 204508 / S288c) (Baker's yeast) protein is Protein HRI1 (HRI1).